A 117-amino-acid chain; its full sequence is Hainantoxin-XV (117 aa).

Positions 1–20 (MKLCAVIIASLLVCVAVASS) are cleaved as a signal peptide. The tract at residues 20–55 (SSDNQKEFAQEKEMTREETQSLGEHEKDDEVTGSEE) is disordered. A propeptide spanning residues 21–56 (SDNQKEFAQEKEMTREETQSLGEHEKDDEVTGSEER) is cleaved from the precursor. Residues 23–55 (NQKEFAQEKEMTREETQSLGEHEKDDEVTGSEE) are compositionally biased toward basic and acidic residues. Intrachain disulfides connect Cys58–Cys72, Cys65–Cys78, Cys69–Cys115, and Cys71–Cys91.

Belongs to the neurotoxin 03 (Tx2) family. 02 subfamily. HNTX-XV sub-subfamily. Expressed by the venom gland.

The protein resides in the secreted. Its function is as follows. Putative ion channel inhibitor. The chain is Hainantoxin-XV from Cyriopagopus hainanus (Chinese bird spider).